Consider the following 135-residue polypeptide: Hemoglobin subunit beta-3 (135 aa).

Residues 2 to 135 (HWTAEEKALV…VVDALSKAYQ (134 aa)) enclose the Globin domain. Heme b-binding residues include His57 and His81.

Belongs to the globin family. As to quaternary structure, hb 3 is a heterotetramer of two alpha and two beta-3 chains. Red blood cells (at protein level).

Involved in oxygen transport from gills to the various peripheral tissues. The sequence is that of Hemoglobin subunit beta-3 from Somniosus microcephalus (Greenland sleeper shark).